Consider the following 238-residue polypeptide: NADH-quinone oxidoreductase subunit C (238 aa).

The interval 1-20 (MSSPDQNPSDAAGQTGSSNE) is disordered.

This sequence belongs to the complex I 30 kDa subunit family. In terms of assembly, NDH-1 is composed of 14 different subunits. Subunits NuoB, C, D, E, F, and G constitute the peripheral sector of the complex.

The protein localises to the cell membrane. The catalysed reaction is a quinone + NADH + 5 H(+)(in) = a quinol + NAD(+) + 4 H(+)(out). Its function is as follows. NDH-1 shuttles electrons from NADH, via FMN and iron-sulfur (Fe-S) centers, to quinones in the respiratory chain. The immediate electron acceptor for the enzyme in this species is believed to be a menaquinone. Couples the redox reaction to proton translocation (for every two electrons transferred, four hydrogen ions are translocated across the cytoplasmic membrane), and thus conserves the redox energy in a proton gradient. The sequence is that of NADH-quinone oxidoreductase subunit C from Mycobacterium marinum (strain ATCC BAA-535 / M).